We begin with the raw amino-acid sequence, 573 residues long: Phosphomethylpyrimidine synthase (573 aa).

Residues asparagine 190, methionine 219, tyrosine 248, histidine 284, 304-306 (SRG), 345-348 (DGLR), and glutamate 384 contribute to the substrate site. Position 388 (histidine 388) interacts with Zn(2+). Tyrosine 411 contributes to the substrate binding site. A Zn(2+)-binding site is contributed by histidine 452. [4Fe-4S] cluster-binding residues include cysteine 532, cysteine 535, and cysteine 540.

It belongs to the ThiC family. [4Fe-4S] cluster serves as cofactor.

The enzyme catalyses 5-amino-1-(5-phospho-beta-D-ribosyl)imidazole + S-adenosyl-L-methionine = 4-amino-2-methyl-5-(phosphooxymethyl)pyrimidine + CO + 5'-deoxyadenosine + formate + L-methionine + 3 H(+). It participates in cofactor biosynthesis; thiamine diphosphate biosynthesis. In terms of biological role, catalyzes the synthesis of the hydroxymethylpyrimidine phosphate (HMP-P) moiety of thiamine from aminoimidazole ribotide (AIR) in a radical S-adenosyl-L-methionine (SAM)-dependent reaction. This is Phosphomethylpyrimidine synthase from Geobacillus sp. (strain WCH70).